A 147-amino-acid polypeptide reads, in one-letter code: Leghemoglobin-1 (147 aa).

The Globin domain occupies 2 to 147; sequence SFTDKQEALV…LATAIKKAMS (146 aa). Nitrated tyrosine is present on residues Y25 and Y30. S45 serves as a coordination point for heme b. S45 is modified (phosphoserine). H62 serves as a coordination point for O2. Residues K65, H94, and K97 each coordinate heme b. Y135 bears the Nitrated tyrosine mark.

Belongs to the plant globin family. Monomer. Post-translationally, nitrated in effective nodules and particularly in hypoxic conditions; this mechanism may play a protective role in the symbiosis by buffering toxic peroxynitrite NO(2)(-). Nitration level decrease during nodule senescence. In terms of processing, phosphorylation at Ser-45 disrupts the molecular environment of its porphyrin ring oxygen binding pocket, thus leading to a reduced oxygen consumption and to the delivery of oxygen O(2) to symbiosomes. Root nodules.

The protein resides in the cytoplasm. It localises to the cytosol. Its subcellular location is the nucleus. In terms of biological role, leghemoglobin that reversibly binds oxygen O(2) through a pentacoordinated heme iron. In root nodules, facilitates the diffusion of oxygen to the bacteroids while preventing the bacterial nitrogenase from being inactivated by buffering dioxygen, nitric oxide and carbon monoxide, and promoting the formation of reactive oxygen species (ROS, e.g. H(2)O(2)). This role is essential for symbiotic nitrogen fixation (SNF). The sequence is that of Leghemoglobin-1 from Medicago sativa (Alfalfa).